Reading from the N-terminus, the 139-residue chain is ATP synthase epsilon chain (139 aa).

It belongs to the ATPase epsilon chain family. In terms of assembly, F-type ATPases have 2 components, CF(1) - the catalytic core - and CF(0) - the membrane proton channel. CF(1) has five subunits: alpha(3), beta(3), gamma(1), delta(1), epsilon(1). CF(0) has three main subunits: a, b and c.

The protein resides in the cell inner membrane. In terms of biological role, produces ATP from ADP in the presence of a proton gradient across the membrane. This is ATP synthase epsilon chain from Salmonella arizonae (strain ATCC BAA-731 / CDC346-86 / RSK2980).